Consider the following 206-residue polypeptide: uncharacterized protein (206 aa).

The helical transmembrane segment at Leu-4–Ile-24 threads the bilayer.

It localises to the membrane. This is an uncharacterized protein from Mycobacterium tuberculosis (strain CDC 1551 / Oshkosh).